We begin with the raw amino-acid sequence, 426 residues long: MSAPLADIDPDIAGLLGQELGRQRDTLEMIASENFVPRAVLQAQGSVLTNKYAEGLPGRRYYGGCEYVDVVENIARDRAKALFGADFANVQPHSGAQANAAVLHALMTPGERLLGLDLANGGHLTHGMKLNFSGKLYDVGFYGVDPTTHLIDMDAVRAKALEFRPKVIIAGWSAYPRVLDFAAFASIADEVGAKLWVDMAHFAGLVAAGLHPSPVPHADVVSTTVHKTLGGPRSGLILGKQEYAKSINSAVFPGQQGGPLMHVIAAKAVALKIAGTEEFADRQRRTLSGARILAERLSGADVAAAGVSVVSGGTDVHLVLVDLRNSELDGQAAEDLLHEIGITVNRNAVPNDPRPPMVTSGLRVGTPALATRGFGDAEFSEVADVIATALAGGRGADLAALRDRVTRLARDFPLYEGLEDWALVGR.

Residues leucine 118 and 122–124 (GHL) each bind (6S)-5,6,7,8-tetrahydrofolate. Lysine 227 carries the post-translational modification N6-(pyridoxal phosphate)lysine.

It belongs to the SHMT family. In terms of assembly, homodimer. Requires pyridoxal 5'-phosphate as cofactor.

It localises to the cytoplasm. It carries out the reaction (6R)-5,10-methylene-5,6,7,8-tetrahydrofolate + glycine + H2O = (6S)-5,6,7,8-tetrahydrofolate + L-serine. It participates in one-carbon metabolism; tetrahydrofolate interconversion. Its pathway is amino-acid biosynthesis; glycine biosynthesis; glycine from L-serine: step 1/1. Its function is as follows. Catalyzes the reversible interconversion of serine and glycine with tetrahydrofolate (THF) serving as the one-carbon carrier. This reaction serves as the major source of one-carbon groups required for the biosynthesis of purines, thymidylate, methionine, and other important biomolecules. Also exhibits THF-independent aldolase activity toward beta-hydroxyamino acids, producing glycine and aldehydes, via a retro-aldol mechanism. In Mycobacterium avium (strain 104), this protein is Serine hydroxymethyltransferase.